The following is a 357-amino-acid chain: 3-dehydroquinate synthase (357 aa).

NAD(+) is bound by residues G104–D108, T128–T129, K141, and F168–T171. Zn(2+) contacts are provided by E183, H243, and H260.

Belongs to the sugar phosphate cyclases superfamily. Dehydroquinate synthase family. It depends on NAD(+) as a cofactor. Co(2+) is required as a cofactor. Requires Zn(2+) as cofactor.

It is found in the cytoplasm. It catalyses the reaction 7-phospho-2-dehydro-3-deoxy-D-arabino-heptonate = 3-dehydroquinate + phosphate. The protein operates within metabolic intermediate biosynthesis; chorismate biosynthesis; chorismate from D-erythrose 4-phosphate and phosphoenolpyruvate: step 2/7. Its function is as follows. Catalyzes the conversion of 3-deoxy-D-arabino-heptulosonate 7-phosphate (DAHP) to dehydroquinate (DHQ). This chain is 3-dehydroquinate synthase, found in Streptococcus pyogenes serotype M6 (strain ATCC BAA-946 / MGAS10394).